Consider the following 557-residue polypeptide: Mercuric reductase (557 aa).

The region spanning 1-65 (MILLSIEGMT…AIEALGYIAK (65 aa)) is the HMA domain. C11 and C14 together coordinate a metal cation. Residues A106 and A126 each contribute to the FAD site. A disulfide bond links C133 and C138. 4 residues coordinate FAD: K142, A207, D399, and V407. Positions 554 and 555 each coordinate Hg(2+).

The protein belongs to the class-I pyridine nucleotide-disulfide oxidoreductase family. In terms of assembly, homodimer. It depends on FAD as a cofactor.

It catalyses the reaction Hg + NADP(+) + H(+) = Hg(2+) + NADPH. Resistance to Hg(2+) in bacteria appears to be governed by a specialized system which includes mercuric reductase. MerA protein is responsible for volatilizing mercury as Hg(0). In Shewanella putrefaciens (Pseudomonas putrefaciens), this protein is Mercuric reductase (merA).